A 657-amino-acid chain; its full sequence is Acetyl-coenzyme A synthetase (657 aa).

CoA-binding positions include 192 to 195 (RRGK) and T311. Residues 387 to 389 (GEP), 411 to 416 (DTWWQT), D504, R519, and R530 each bind ATP. Positions 543 and 546 each coordinate Mg(2+). R592 is a binding site for CoA. Position 617 is an N6-acetyllysine (K617).

This sequence belongs to the ATP-dependent AMP-binding enzyme family. It depends on Mg(2+) as a cofactor. Post-translationally, acetylated. Deacetylation by the SIR2-homolog deacetylase activates the enzyme.

The catalysed reaction is acetate + ATP + CoA = acetyl-CoA + AMP + diphosphate. Catalyzes the conversion of acetate into acetyl-CoA (AcCoA), an essential intermediate at the junction of anabolic and catabolic pathways. AcsA undergoes a two-step reaction. In the first half reaction, AcsA combines acetate with ATP to form acetyl-adenylate (AcAMP) intermediate. In the second half reaction, it can then transfer the acetyl group from AcAMP to the sulfhydryl group of CoA, forming the product AcCoA. The protein is Acetyl-coenzyme A synthetase of Campylobacter jejuni subsp. jejuni serotype O:6 (strain 81116 / NCTC 11828).